We begin with the raw amino-acid sequence, 441 residues long: MGNSEMSASEVAAAKQKNVDDWLPITSSRNAKWWYSAFHNVTAMVGAGVLSLPYAMSNLGWGPGVTIMVMSWIITLYTLWQMVEMHEIVPGKRLDRYHELGQHAFGEKLGLWIVVPQQLIVEVGVDIVYMVTGGASLKKVHQLVCPDCKEIRTTFWIMIFASVHFVISHLPNFNSISIISLAAAVMSLTYSTIAWAASVHKGVHPDVDYSPRASTDVGKVFNFLNALGDVAFAYAGHNVVLEIQATIPSTPEMPSKVPMWRGVIVAYIVVAICYFPVAFLGYYIFGNSVDDNILITLEKPIWLIAMANMFVVIHVIGSYQIFAMPVFDMLETVLVKKMNFNPSFKLRFITRSLYVAFTMIVAICVPFFGGLLGFFGGFAFAPTTYYLPCIMWLVLKKPKRFGLSWTANWFCIIVGVLLTILAPIGGLRTIIINAKTYKFFS.

The Cytoplasmic segment spans residues 1–32; sequence MGNSEMSASEVAAAKQKNVDDWLPITSSRNAK. The chain crosses the membrane as a helical span at residues 33–53; that stretch reads WWYSAFHNVTAMVGAGVLSLP. Over 54 to 58 the chain is Extracellular; sequence YAMSN. The chain crosses the membrane as a helical span at residues 59 to 79; the sequence is LGWGPGVTIMVMSWIITLYTL. At 80-110 the chain is on the cytoplasmic side; sequence WQMVEMHEIVPGKRLDRYHELGQHAFGEKLG. Residues 111–131 traverse the membrane as a helical segment; the sequence is LWIVVPQQLIVEVGVDIVYMV. The Extracellular segment spans residues 132-152; the sequence is TGGASLKKVHQLVCPDCKEIR. The helical transmembrane segment at 153–173 threads the bilayer; it reads TTFWIMIFASVHFVISHLPNF. Residues 174–175 are Cytoplasmic-facing; that stretch reads NS. The helical transmembrane segment at 176-196 threads the bilayer; it reads ISIISLAAAVMSLTYSTIAWA. Residues 197 to 222 are Extracellular-facing; it reads ASVHKGVHPDVDYSPRASTDVGKVFN. The chain crosses the membrane as a helical span at residues 223–243; that stretch reads FLNALGDVAFAYAGHNVVLEI. At 244 to 263 the chain is on the cytoplasmic side; it reads QATIPSTPEMPSKVPMWRGV. Residues 264-284 traverse the membrane as a helical segment; the sequence is IVAYIVVAICYFPVAFLGYYI. Residues 285 to 300 lie on the Extracellular side of the membrane; the sequence is FGNSVDDNILITLEKP. Residues 301–321 form a helical membrane-spanning segment; that stretch reads IWLIAMANMFVVIHVIGSYQI. Over 322–347 the chain is Cytoplasmic; sequence FAMPVFDMLETVLVKKMNFNPSFKLR. A helical transmembrane segment spans residues 348 to 370; that stretch reads FITRSLYVAFTMIVAICVPFFGG. Over 371-373 the chain is Extracellular; sequence LLG. A helical membrane pass occupies residues 374 to 396; that stretch reads FFGGFAFAPTTYYLPCIMWLVLK. Residues 397-406 are Cytoplasmic-facing; the sequence is KPKRFGLSWT. A helical membrane pass occupies residues 407-427; it reads ANWFCIIVGVLLTILAPIGGL. Over 428–441 the chain is Extracellular; sequence RTIIINAKTYKFFS.

This sequence belongs to the amino acid/polyamine transporter 2 family. Amino acid/auxin permease (AAAP) (TC 2.A.18.2) subfamily. In terms of tissue distribution, expressed in flower buds and to lower levels in leaves and stems. Not detected in roots and siliques. Restricted to the tapetum cell layer.

The protein resides in the cell membrane. Inhibited by diethylstibestrol (DES), 2,4-dinitrophenol (DNP) and carbonlycyanide m-chlorophenylhydrazone (CCCP). In terms of biological role, amino acid-proton symporter. Transporter with a broad specificity for neutral and acidic amino acids. Basic amino acids are only marginally transported. Involved in import of amino acids into the tapetum cells for synthesis of compounds important for microspore structure. The protein is Lysine histidine transporter 2 (LHT2) of Arabidopsis thaliana (Mouse-ear cress).